The chain runs to 245 residues: Myozenin-3 (245 aa).

A Phosphoserine modification is found at serine 31. A binding to ACTN2, PPP3CA and TCAP region spans residues 50-67 (LLFQKRQRRVQKFTFELS). Residues 67-108 (SESLQAILASSARGKVAGRAAQATVPNGLEEQNHHSETHVFQ) are binding to FLNC. A disordered region spans residues 93-134 (NGLEEQNHHSETHVFQGSPGDPGITHLGAAGTGSVRSPSALA). Positions 180-201 (PIPRDYRNFNKTPVPFGGPHVR) are binding to ACTN2.

Belongs to the myozenin family. As to quaternary structure, interacts with ACTN2, LDB3, FLNC, PPP3CA and TCAP. In terms of tissue distribution, expressed specifically in skeletal muscle and is enriched in fast-twitch muscle fibers. Not detected in heart.

It is found in the cytoplasm. It localises to the myofibril. The protein resides in the sarcomere. Its subcellular location is the z line. In terms of biological role, myozenins may serve as intracellular binding proteins involved in linking Z line proteins such as alpha-actinin, gamma-filamin, TCAP/telethonin, LDB3/ZASP and localizing calcineurin signaling to the sarcomere. Plays an important role in the modulation of calcineurin signaling. May play a role in myofibrillogenesis. The protein is Myozenin-3 of Mus musculus (Mouse).